We begin with the raw amino-acid sequence, 475 residues long: Ankyrin repeat, SAM and basic leucine zipper domain-containing protein 1 (475 aa).

The segment at 1-25 (MAASALRGLPVAGGGESSESEDDGW) is disordered. Phosphoserine is present on residues Ser17, Ser18, and Ser20. 6 ANK repeats span residues 45-74 (EKKEKFKKAMTIGDVSLVQELLDSGISVDS), 78-107 (YGWTPLMYAASVANAELVRVLLDRGANASF), 110-144 (DKQSILITACSAHGSEEQILKCVELLLSRNADPNV), 148-177 (RLMTPIMYAARDGHTQVVALLVAHGAEVNT), 181-210 (NGYTALTWAARQGHKNIVLKLLELGANKML), and 214-243 (DGKMPSEIAKRNKHHEIFNLLSFTLNPLEG). Residues 272-334 (SYTAFGDLEV…KILAALKELQ (63 aa)) enclose the SAM domain.

In terms of assembly, interacts with DDX4, PIWIL1, RANBP9 and TDRD1. As to expression, expressed exclusively in the testis and ovary and at higher levels in the adult testis compared with the adult ovary.

The protein resides in the cytoplasm. Its function is as follows. Plays a central role during spermatogenesis by repressing transposable elements and preventing their mobilization, which is essential for the germline integrity. Acts via the piRNA metabolic process, which mediates the repression of transposable elements during meiosis by forming complexes composed of piRNAs and Piwi proteins and governs the methylation and subsequent repression of transposons. Its association with pi-bodies suggests a participation in the primary piRNAs metabolic process. Required prior to the pachytene stage to facilitate the production of multiple types of piRNAs, including those associated with repeats involved in the regulation of retrotransposons. May act by mediating protein-protein interactions during germ cell maturation. This is Ankyrin repeat, SAM and basic leucine zipper domain-containing protein 1 from Homo sapiens (Human).